A 178-amino-acid chain; its full sequence is uncharacterized protein (178 aa).

The signal sequence occupies residues 1–19 (MINRKILLTSLLLIFTVLS). Active-site residues include Arg-52, Glu-60, and Arg-94.

This sequence belongs to the thermonuclease family.

This is an uncharacterized protein from Haemophilus influenzae (strain ATCC 51907 / DSM 11121 / KW20 / Rd).